We begin with the raw amino-acid sequence, 885 residues long: Alanine--tRNA ligase (885 aa).

Positions 563, 567, 677, and 681 each coordinate Zn(2+). Residues 848-868 are disordered; that stretch reads LGGKGGGGRPDRAQGGAPSLA.

The protein belongs to the class-II aminoacyl-tRNA synthetase family. Requires Zn(2+) as cofactor.

The protein localises to the cytoplasm. It carries out the reaction tRNA(Ala) + L-alanine + ATP = L-alanyl-tRNA(Ala) + AMP + diphosphate. Catalyzes the attachment of alanine to tRNA(Ala) in a two-step reaction: alanine is first activated by ATP to form Ala-AMP and then transferred to the acceptor end of tRNA(Ala). Also edits incorrectly charged Ser-tRNA(Ala) and Gly-tRNA(Ala) via its editing domain. The chain is Alanine--tRNA ligase from Paracoccus denitrificans (strain Pd 1222).